A 656-amino-acid chain; its full sequence is Macrolide export ATP-binding/permease protein MacB (656 aa).

One can recognise an ABC transporter domain in the interval 20–258 (IELAGITRSF…EPDFAPHVDR (239 aa)). Residue 56-63 (GASGSGKS) coordinates ATP. 4 helical membrane passes run 284-304 (ALTL…LAIG), 531-551 (LTIL…IGVM), 591-611 (ALGG…IALF), and 619-639 (LLPV…FGYL).

The protein belongs to the ABC transporter superfamily. Macrolide exporter (TC 3.A.1.122) family. As to quaternary structure, homodimer.

Its subcellular location is the cell inner membrane. In terms of biological role, non-canonical ABC transporter that contains transmembrane domains (TMD), which form a pore in the inner membrane, and an ATP-binding domain (NBD), which is responsible for energy generation. Confers resistance against macrolides. This is Macrolide export ATP-binding/permease protein MacB from Azoarcus sp. (strain BH72).